Consider the following 354-residue polypeptide: Uroporphyrinogen decarboxylase (354 aa).

Substrate-binding positions include 27-31 (RQAGR), aspartate 77, tyrosine 154, serine 209, and histidine 327.

It belongs to the uroporphyrinogen decarboxylase family. Homodimer.

It is found in the cytoplasm. The enzyme catalyses uroporphyrinogen III + 4 H(+) = coproporphyrinogen III + 4 CO2. Its pathway is porphyrin-containing compound metabolism; protoporphyrin-IX biosynthesis; coproporphyrinogen-III from 5-aminolevulinate: step 4/4. Its function is as follows. Catalyzes the decarboxylation of four acetate groups of uroporphyrinogen-III to yield coproporphyrinogen-III. The sequence is that of Uroporphyrinogen decarboxylase from Shewanella halifaxensis (strain HAW-EB4).